A 357-amino-acid polypeptide reads, in one-letter code: Sulfate/thiosulfate import ATP-binding protein CysA (357 aa).

The region spanning 3–237 is the ABC transporter domain; that stretch reads IQIQGVSKQY…PASPFVYDFL (235 aa). ATP is bound at residue 35–42; that stretch reads GPSGSGKT.

This sequence belongs to the ABC transporter superfamily. Sulfate/tungstate importer (TC 3.A.1.6) family. As to quaternary structure, the complex is composed of two ATP-binding proteins (CysA), two transmembrane proteins (CysT and CysW) and a solute-binding protein (CysP).

Its subcellular location is the cell membrane. The enzyme catalyses sulfate(out) + ATP + H2O = sulfate(in) + ADP + phosphate + H(+). The catalysed reaction is thiosulfate(out) + ATP + H2O = thiosulfate(in) + ADP + phosphate + H(+). In terms of biological role, part of the ABC transporter complex CysAWTP involved in sulfate/thiosulfate import. Responsible for energy coupling to the transport system. The protein is Sulfate/thiosulfate import ATP-binding protein CysA of Bacillus cereus (strain ATCC 14579 / DSM 31 / CCUG 7414 / JCM 2152 / NBRC 15305 / NCIMB 9373 / NCTC 2599 / NRRL B-3711).